We begin with the raw amino-acid sequence, 928 residues long: DNA polymerase I (928 aa).

A 5'-3' exonuclease domain is found at 1–323; that stretch reads MVQIPQNPLI…ADEAPEVTAT (323 aa). Positions 324–517 constitute a 3'-5' exonuclease domain; the sequence is VISYDNYVTI…LHLKMWPDLQ (194 aa). The segment at 324–928 is klenow fragment; that stretch reads VISYDNYVTI…GSGENWDQAH (605 aa). The polymerase stretch occupies residues 521-928; sequence GPLNVFENIE…GSGENWDQAH (408 aa).

The protein belongs to the DNA polymerase type-A family. As to quaternary structure, single-chain monomer with multiple functions.

It carries out the reaction DNA(n) + a 2'-deoxyribonucleoside 5'-triphosphate = DNA(n+1) + diphosphate. In terms of biological role, in addition to polymerase activity, this DNA polymerase exhibits 3'-5' and 5'-3' exonuclease activity. It is able to utilize nicked circular duplex DNA as a template and can unwind the parental DNA strand from its template. Functionally, genetic interactions among priB, dam, lexA, nagC, polA, rdgB, rdgB, rep and uup link the PriA-PriB replication restart pathway to DNA double-strand break repair. The chain is DNA polymerase I (polA) from Escherichia coli (strain K12).